Reading from the N-terminus, the 588-residue chain is 3-methylmercaptopropionyl-CoA dehydrogenase (588 aa).

The active-site Proton acceptor is E435.

This sequence belongs to the acyl-CoA dehydrogenase family. FAD is required as a cofactor.

The catalysed reaction is 3-(methylsulfanyl)propanoyl-CoA + oxidized [electron-transfer flavoprotein] + H(+) = 3-(methylsulfanyl)acryloyl-CoA + reduced [electron-transfer flavoprotein]. In terms of biological role, involved in the assimilation of dimethylsulphoniopropionate (DMSP), an important compound in the fixation of carbon in marine phytoplankton, by mediating the conversion of 3-(methylthio)propanoyl-CoA (MMPA-CoA) to 3-(methylthio)acryloyl-CoA (MTA-CoA). This chain is 3-methylmercaptopropionyl-CoA dehydrogenase, found in Ruegeria pomeroyi (strain ATCC 700808 / DSM 15171 / DSS-3) (Silicibacter pomeroyi).